Reading from the N-terminus, the 260-residue chain is Adenosylcobinamide-GDP ribazoletransferase (260 aa).

7 consecutive transmembrane segments (helical) span residues 42-62 (TWALPVAGLLVGLAGALVYKI), 68-88 (LTPNLAALLALATTALITGAL), 118-137 (IGTYGVCALILSFGLRWSAL), 144-166 (WLVTLALCAAHCAARAGVPAFMS), 180-200 (AGAPPGRSVAIAFAVGTLVLT), 201-221 (LALGPGKALVGLILLSLAGLI), and 237-257 (ILGAFEQTGEIVILLVAAAFQ).

This sequence belongs to the CobS family. Mg(2+) is required as a cofactor.

It is found in the cell inner membrane. It catalyses the reaction alpha-ribazole + adenosylcob(III)inamide-GDP = adenosylcob(III)alamin + GMP + H(+). It carries out the reaction alpha-ribazole 5'-phosphate + adenosylcob(III)inamide-GDP = adenosylcob(III)alamin 5'-phosphate + GMP + H(+). It functions in the pathway cofactor biosynthesis; adenosylcobalamin biosynthesis; adenosylcobalamin from cob(II)yrinate a,c-diamide: step 7/7. Joins adenosylcobinamide-GDP and alpha-ribazole to generate adenosylcobalamin (Ado-cobalamin). Also synthesizes adenosylcobalamin 5'-phosphate from adenosylcobinamide-GDP and alpha-ribazole 5'-phosphate. This Bradyrhizobium diazoefficiens (strain JCM 10833 / BCRC 13528 / IAM 13628 / NBRC 14792 / USDA 110) protein is Adenosylcobinamide-GDP ribazoletransferase.